The primary structure comprises 386 residues: MKIHEYQAKELLRKYGVVTPRGFHTVSVDGAVKAAEELGGKIWVVKAQIHAGGRGKGGGVKLARSLDEVRQHASDILGMQLVTHQTGPEGQKVRNLLIEEGADIQKEYYVAALTDRATQKVAIMASSEGGMDIEEVAHSTPEKILKEFVDPLVGLTDAQAENLARGIGVPEASVAKAVDALKRLYTCYMETDASLAEINPLILEGNGNIKALDAKFNFDSNALYRHPEIVDFRDFDEEDADEIEASKFDLAYISLDGNIGCLVNGAGLAMATMDTIKLFGAEPANFLDVGGGATTEKVTEAFKIMLKNPKVKGILVNIFGGIMKCDTIATGVVAAAKEVNLSVPLVVRMKGTNEDLGKKILAESGLPIIAADTMAEAATKIVAAVK.

Residues 9 to 244 enclose the ATP-grasp domain; sequence KELLRKYGVV…FDEEDADEIE (236 aa). ATP contacts are provided by residues K46, 53–55, E99, A102, and E107; that span reads GRG. N199 and D213 together coordinate Mg(2+). Substrate contacts are provided by residues N264 and 321-323; that span reads GIM.

The protein belongs to the succinate/malate CoA ligase beta subunit family. As to quaternary structure, heterotetramer of two alpha and two beta subunits. The cofactor is Mg(2+).

The catalysed reaction is succinate + ATP + CoA = succinyl-CoA + ADP + phosphate. It catalyses the reaction GTP + succinate + CoA = succinyl-CoA + GDP + phosphate. It participates in carbohydrate metabolism; tricarboxylic acid cycle; succinate from succinyl-CoA (ligase route): step 1/1. Its function is as follows. Succinyl-CoA synthetase functions in the citric acid cycle (TCA), coupling the hydrolysis of succinyl-CoA to the synthesis of either ATP or GTP and thus represents the only step of substrate-level phosphorylation in the TCA. The beta subunit provides nucleotide specificity of the enzyme and binds the substrate succinate, while the binding sites for coenzyme A and phosphate are found in the alpha subunit. The polypeptide is Succinate--CoA ligase [ADP-forming] subunit beta (Aromatoleum aromaticum (strain DSM 19018 / LMG 30748 / EbN1) (Azoarcus sp. (strain EbN1))).